The primary structure comprises 450 residues: Putative serine/threonine-protein kinase R517/R518 (450 aa).

The 282-residue stretch at 9–290 (KMTDTVLGKG…WSELFHHYWF (282 aa)) folds into the Protein kinase domain. ATP contacts are provided by residues 15–23 (LGKGGFSEV) and Lys-38. The active-site Proton acceptor is Asp-140.

It belongs to the protein kinase superfamily. Ser/Thr protein kinase family.

It catalyses the reaction L-seryl-[protein] + ATP = O-phospho-L-seryl-[protein] + ADP + H(+). It carries out the reaction L-threonyl-[protein] + ATP = O-phospho-L-threonyl-[protein] + ADP + H(+). The chain is Putative serine/threonine-protein kinase R517/R518 from Acanthamoeba polyphaga mimivirus (APMV).